The primary structure comprises 159 residues: Cyclic pyranopterin monophosphate synthase (159 aa).

Substrate is bound by residues 75–77 (MCH) and 113–114 (ME). Asp-128 is a catalytic residue.

The protein belongs to the MoaC family. As to quaternary structure, homohexamer; trimer of dimers.

It catalyses the reaction (8S)-3',8-cyclo-7,8-dihydroguanosine 5'-triphosphate = cyclic pyranopterin phosphate + diphosphate. It functions in the pathway cofactor biosynthesis; molybdopterin biosynthesis. Functionally, catalyzes the conversion of (8S)-3',8-cyclo-7,8-dihydroguanosine 5'-triphosphate to cyclic pyranopterin monophosphate (cPMP). This is Cyclic pyranopterin monophosphate synthase from Desulfatibacillum aliphaticivorans.